The chain runs to 142 residues: MALAAADRATVRALWKKMGSNVGVYATEALERMFLGFPSTTTYFLHLDLSLGSTQVKAHGQKVADALTLAVEHLEDLPRALSALRHRHVRELRVDPASFQLLGHCLLVTPARHFPGDFSPTLHASLVKFLSHVISALASDCR.

Residues 2 to 142 (ALAAADRATV…VISALASDCR (141 aa)) form the Globin domain. H59 and H88 together coordinate heme b.

It belongs to the globin family.

The polypeptide is Hemoglobin subunit theta-1 (HBQ1) (Equus caballus (Horse)).